The sequence spans 371 residues: Aminomethyltransferase (371 aa).

This sequence belongs to the GcvT family. As to quaternary structure, the glycine cleavage system is composed of four proteins: P, T, L and H.

The catalysed reaction is N(6)-[(R)-S(8)-aminomethyldihydrolipoyl]-L-lysyl-[protein] + (6S)-5,6,7,8-tetrahydrofolate = N(6)-[(R)-dihydrolipoyl]-L-lysyl-[protein] + (6R)-5,10-methylene-5,6,7,8-tetrahydrofolate + NH4(+). In terms of biological role, the glycine cleavage system catalyzes the degradation of glycine. The polypeptide is Aminomethyltransferase (Nitrosococcus oceani (strain ATCC 19707 / BCRC 17464 / JCM 30415 / NCIMB 11848 / C-107)).